The chain runs to 60 residues: Large ribosomal subunit protein uL30 (60 aa).

It belongs to the universal ribosomal protein uL30 family. In terms of assembly, part of the 50S ribosomal subunit.

This is Large ribosomal subunit protein uL30 from Sphingopyxis alaskensis (strain DSM 13593 / LMG 18877 / RB2256) (Sphingomonas alaskensis).